A 209-amino-acid chain; its full sequence is APC/C-CDH1 modulator 1 (209 aa).

The segment at 1-38 (MISPSKKRTILSSKNINQKPRAVVKGNELRSPSKRRSQ) is disordered. Ser-48 is modified (phosphoserine). Thr-161 carries the phosphothreonine modification. Residue Ser-202 is modified to Phosphoserine.

In terms of assembly, interacts with CDH1, BMH1 and BMH2.

Negative regulator of GDH1, the activator protein that regulates the ubiquitin ligase activity and substrate specificity of the anaphase promoting complex/cyclosome (APC/C), and which is required for exit from mitosis, cytokinesis and formation of prereplicative complexes in G1. The protein is APC/C-CDH1 modulator 1 (ACM1) of Saccharomyces cerevisiae (strain ATCC 204508 / S288c) (Baker's yeast).